Reading from the N-terminus, the 405-residue chain is Replication factor C large subunit (405 aa).

Position 47–54 (47–54 (GPPGVGKT)) interacts with ATP.

It belongs to the activator 1 small subunits family. RfcL subfamily. As to quaternary structure, heteromultimer composed of small subunits (RfcS) and large subunits (RfcL).

In terms of biological role, part of the RFC clamp loader complex which loads the PCNA sliding clamp onto DNA. This is Replication factor C large subunit from Saccharolobus islandicus (strain M.16.27) (Sulfolobus islandicus).